The sequence spans 3387 residues: Genome polyprotein (3387 aa).

Topologically, residues 1–100 (MNQRKKVVRP…LNILNGRKRS (100 aa)) are cytoplasmic. Residues 36–71 (LFSGKGPLRMVLAFITFLRVLSIPPTAGILKRWGQL) form a hydrophobic; homodimerization of capsid protein C region. Residues 100–113 (STITLLCLIPTVMA) constitute a propeptide, ER anchor for the capsid protein C, removed in mature form by serine protease NS3. A helical transmembrane segment spans residues 101 to 117 (TITLLCLIPTVMAFSLS). The Extracellular portion of the chain corresponds to 118–237 (TRDGEPLMIV…GAWKHAQRVE (120 aa)). Residue Asn-182 is glycosylated (N-linked (GlcNAc...) asparagine; by host). A helical membrane pass occupies residues 238-258 (SWILRNPGFALLAGFMAYMIG). The Cytoplasmic segment spans residues 259-265 (QTGIQRT). A helical membrane pass occupies residues 266–279 (VFFVLMMLVAPSYG). Topologically, residues 280–725 (MRCVGVGNRD…HQVFGSVYTT (446 aa)) are extracellular. Intrachain disulfides connect Cys-282–Cys-309, Cys-339–Cys-400, Cys-353–Cys-384, and Cys-371–Cys-395. Asn-346 is a glycosylation site (N-linked (GlcNAc...) asparagine; by host). Positions 377–390 (DRGWGNGCGLFGKG) are fusion peptide. A glycan (N-linked (GlcNAc...) asparagine; by host) is linked at Asn-432. Intrachain disulfides connect Cys-464–Cys-564 and Cys-581–Cys-612. A helical transmembrane segment spans residues 726–746 (MFGGVSWMIRILIGFLVLWIG). The Cytoplasmic portion of the chain corresponds to 747–751 (TNSRN). A helical transmembrane segment spans residues 752-772 (TSMAMTCIAVGGITLFLGFTV). Topologically, residues 773-1194 (QADMGCVASW…MLGDTMSGRI (422 aa)) are extracellular. Disulfide bonds link Cys-778/Cys-789, Cys-829/Cys-917, Cys-953/Cys-997, Cys-1054/Cys-1103, Cys-1065/Cys-1087, and Cys-1086/Cys-1090. N-linked (GlcNAc...) asparagine; by host glycans are attached at residues Asn-904 and Asn-981. Residues 1195–1218 (GGQIHLAIMAVFKMSPGYVLGVFL) traverse the membrane as a helical segment. Topologically, residues 1219–1224 (RKLTSR) are lumenal. A helical membrane pass occupies residues 1225–1243 (ETALMVIGMAMTTVLSIPH). At 1244-1267 (DLMELIDGISLGLILLKIVTQFDN) the chain is on the cytoplasmic side. A helical membrane pass occupies residues 1268–1288 (TQVGTLALSLTFIRSTMPLVM). A topological domain (lumenal) is located at residue Ala-1289. The helical transmembrane segment at 1290 to 1308 (WRTIMAVLFVVTLIPLCRT) threads the bilayer. The Lumenal segment spans residues 1309-1316 (SCLQKQSH). A helical membrane pass occupies residues 1317–1337 (WVEITALILGAQALPVYLMTL). At 1338–1345 (MKGASRRS) the chain is on the cytoplasmic side. The helical transmembrane segment at 1346 to 1366 (WPLNEGIMAVGLVSLLGSALL) threads the bilayer. Residues 1367 to 1369 (KND) are Lumenal-facing. A helical transmembrane segment spans residues 1370–1390 (VPLAGPMVAGGLLLAAYVMSG). The Cytoplasmic portion of the chain corresponds to 1391 to 1437 (SSADLSLEKAANVQWDEMADITGSSPIIEVKQDEDGSFSIRDVEETN). The segment at 1397–1436 (LEKAANVQWDEMADITGSSPIIEVKQDEDGSFSIRDVEET) is interacts with and activates NS3 protease. The segment at residues 1438–1458 (MITLLVKLALITVSGLYPLAI) is an intramembrane region (helical). Residues 1459–2143 (PVTMTLWYMW…QHALNELPES (685 aa)) lie on the Cytoplasmic side of the membrane. The Peptidase S7 domain maps to 1475-1652 (SGALWDVPSP…ERIGEPDYEV (178 aa)). Catalysis depends on charge relay system; for serine protease NS3 activity residues His-1525, Asp-1549, and Ser-1609. A Helicase ATP-binding domain is found at 1654 to 1810 (EDIFRKKRLT…QSNSPIEDIE (157 aa)). An important for RNA-binding region spans residues 1658 to 1661 (RKKR). 1667-1674 (LHPGAGKT) contributes to the ATP binding site. Residues 1758–1761 (DEAH) carry the DEAH box motif. The region spanning 1820–1987 (TGFDWITDYQ…IIPTLFGPER (168 aa)) is the Helicase C-terminal domain. Lys-1862 bears the N6-acetyllysine; by host mark. The helical transmembrane segment at 2144–2164 (LETLMLVALLGAMTAGIFLFF) threads the bilayer. Residues 2165 to 2169 (MQGKG) lie on the Lumenal side of the membrane. The segment at residues 2170–2190 (IGKLSMGLITIAVASGLLWVA) is an intramembrane region (helical). Glu-2191 is a topological domain (lumenal). Residues 2192-2212 (IQPQWIAASIILEFFLMVLLI) form a helical membrane-spanning segment. Over 2213-2225 (PEPEKQRTPQDNQ) the chain is Cytoplasmic. The helical transmembrane segment at 2226–2246 (LIYVILTILTIIGLIAANEMG) threads the bilayer. Topologically, residues 2247 to 2270 (LIEKTKTDFGFYQVKTETTILDVD) are lumenal. The segment at residues 2271–2291 (LRPASAWTLYAVATTILTPML) is an intramembrane region (helical). The Lumenal segment spans residues 2292-2301 (RHTIENTSAN). N-linked (GlcNAc...) asparagine; by host glycosylation is found at Asn-2297 and Asn-2301. Positions 2302-2322 (LSLAAIANQAAVLMGLGKGWP) form an intramembrane region, helical. At 2323–2343 (LHRMDLGVPLLAMGCYSQVNP) the chain is on the lumenal side. Residues 2344 to 2364 (TTLTASLVMLLVHYAIIGPGL) form a helical membrane-spanning segment. Topologically, residues 2365 to 2409 (QAKATREAQKRTAAGIMKNPTVDGITVIDLEPISYDPKFEKQLGQ) are cytoplasmic. A helical membrane pass occupies residues 2410-2430 (VMLLVLCAGQLLLMRTTWAFC). At 2431–2455 (EVLTLATGPILTLWEGNPGRFWNTT) the chain is on the lumenal side. Asn-2453 carries an N-linked (GlcNAc...) asparagine; by host glycan. Residues 2456–2476 (IAVSTANIFRGSYLAGAGLAF) form a helical membrane-spanning segment. Over 2477–3387 (SLIKNAQTPR…SAPSESEGVL (911 aa)) the chain is Cytoplasmic. The mRNA cap 0-1 NS5-type MT domain maps to 2489 to 2751 (TGTTGETLGE…DVDLGAGTRS (263 aa)). Ser-2543 is an S-adenosyl-L-methionine binding site. Residue Ser-2543 is modified to Phosphoserine. Lys-2548 acts as the For 2'-O-MTase activity in catalysis. The SUMO-interacting motif signature appears at 2564–2567 (VVDL). Positions 2573, 2574, 2591, 2592, 2618, and 2619 each coordinate S-adenosyl-L-methionine. The For 2'-O-MTase activity role is filled by Asp-2633. Ile-2634 contacts S-adenosyl-L-methionine. Active-site for 2'-O-MTase activity residues include Lys-2668 and Glu-2704. Tyr-2706 provides a ligand contact to S-adenosyl-L-methionine. Residues Glu-2925, His-2929, Cys-2934, and Cys-2937 each contribute to the Zn(2+) site. The RdRp catalytic domain occupies 3016 to 3166 (LMYADDTAGW…PLDERFGTSL (151 aa)). 3 residues coordinate Zn(2+): His-3200, Cys-3216, and Cys-3335.

The protein in the N-terminal section; belongs to the class I-like SAM-binding methyltransferase superfamily. mRNA cap 0-1 NS5-type methyltransferase family. Homodimer. Interacts (via N-terminus) with host EXOC1 (via C-terminus); this interaction results in EXOC1 degradation through the proteasome degradation pathway. As to quaternary structure, forms heterodimers with envelope protein E in the endoplasmic reticulum and Golgi. In terms of assembly, homodimer; in the endoplasmic reticulum and Golgi. Interacts with protein prM. Interacts with non-structural protein 1. Homodimer; Homohexamer when secreted. Interacts with envelope protein E. As to quaternary structure, interacts (via N-terminus) with serine protease NS3. In terms of assembly, forms a heterodimer with serine protease NS3. May form homooligomers. Forms a heterodimer with NS2B. Interacts with NS4B. Interacts with unphosphorylated RNA-directed RNA polymerase NS5; this interaction stimulates RNA-directed RNA polymerase NS5 guanylyltransferase activity. Interacts with host SHFL. As to quaternary structure, interacts with host MAVS; this interaction inhibits the synthesis of IFN-beta. Interacts with host SHFL. Interacts with host AUP1; the interaction occurs in the presence of Dengue virus NS4B and induces lipophagy which facilitates production of virus progeny particles. In terms of assembly, interacts with serine protease NS3. Homodimer. Interacts with host STAT2; this interaction inhibits the phosphorylation of the latter, and, when all viral proteins are present (polyprotein), targets STAT2 for degradation. Interacts with serine protease NS3. Interacts with host PAF1 complex; the interaction may prevent the recruitment of the PAF1 complex to interferon-responsive genes, and thus reduces the immune response. In terms of processing, specific enzymatic cleavages in vivo yield mature proteins. Cleavages in the lumen of endoplasmic reticulum are performed by host signal peptidase, whereas cleavages in the cytoplasmic side are performed by serine protease NS3. Signal cleavage at the 2K-4B site requires a prior NS3 protease-mediated cleavage at the 4A-2K site. Cleaved in post-Golgi vesicles by a host furin, releasing the mature small envelope protein M, and peptide pr. This cleavage is incomplete as up to 30% of viral particles still carry uncleaved prM. Post-translationally, N-glycosylated. In terms of processing, N-glycosylated. The excreted form is glycosylated and this is required for efficient secretion of the protein from infected cells. Acetylated by host KAT5. Acetylation modulates NS3 RNA-binding and unwinding activities and plays an important positive role for viral replication. Post-translationally, sumoylation of RNA-directed RNA polymerase NS5 increases NS5 protein stability allowing proper viral RNA replication. In terms of processing, phosphorylated on serines residues. This phosphorylation may trigger NS5 nuclear localization.

The protein localises to the virion. It localises to the host nucleus. The protein resides in the host cytoplasm. It is found in the host perinuclear region. Its subcellular location is the secreted. The protein localises to the virion membrane. It localises to the host endoplasmic reticulum membrane. The protein resides in the host mitochondrion. The enzyme catalyses Selective hydrolysis of -Xaa-Xaa-|-Yaa- bonds in which each of the Xaa can be either Arg or Lys and Yaa can be either Ser or Ala.. The catalysed reaction is RNA(n) + a ribonucleoside 5'-triphosphate = RNA(n+1) + diphosphate. It carries out the reaction a ribonucleoside 5'-triphosphate + H2O = a ribonucleoside 5'-diphosphate + phosphate + H(+). It catalyses the reaction ATP + H2O = ADP + phosphate + H(+). The enzyme catalyses a 5'-end (5'-triphosphoguanosine)-ribonucleoside in mRNA + S-adenosyl-L-methionine = a 5'-end (N(7)-methyl 5'-triphosphoguanosine)-ribonucleoside in mRNA + S-adenosyl-L-homocysteine. The catalysed reaction is a 5'-end (N(7)-methyl 5'-triphosphoguanosine)-ribonucleoside in mRNA + S-adenosyl-L-methionine = a 5'-end (N(7)-methyl 5'-triphosphoguanosine)-(2'-O-methyl-ribonucleoside) in mRNA + S-adenosyl-L-homocysteine + H(+). Its function is as follows. Plays a role in virus budding by binding to the cell membrane and gathering the viral RNA into a nucleocapsid that forms the core of a mature virus particle. During virus entry, may induce genome penetration into the host cytoplasm after hemifusion induced by the surface proteins. Can migrate to the cell nucleus where it modulates host functions. Overcomes the anti-viral effects of host EXOC1 by sequestering and degrading the latter through the proteasome degradation pathway. Functionally, regulates the ATPase activity of the NS3 helicase activity. NS4A allows NS3 helicase to conserve energy during unwinding. Plays a role in the inhibition of the host innate immune response. Interacts with host MAVS and thereby prevents the interaction between RIGI and MAVS. In turn, IFN-beta production is impaired. Interacts with host AUP1 which mediates induction of lipophagy in host cells and facilitates production of virus progeny particles. Inhibits RNA silencing by interfering with host Dicer. In terms of biological role, prevents premature fusion activity of envelope proteins in trans-Golgi by binding to envelope protein E at pH6.0. After virion release in extracellular space, gets dissociated from E dimers. Its function is as follows. Acts as a chaperone for envelope protein E during intracellular virion assembly by masking and inactivating envelope protein E fusion peptide. prM is the only viral peptide matured by host furin in the trans-Golgi network probably to avoid catastrophic activation of the viral fusion activity in acidic Golgi compartment prior to virion release. prM-E cleavage is inefficient, and many virions are only partially matured. These uncleaved prM would play a role in immune evasion. Functionally, may play a role in virus budding. Exerts cytotoxic effects by activating a mitochondrial apoptotic pathway through M ectodomain. May display a viroporin activity. Binds to host cell surface receptor and mediates fusion between viral and cellular membranes. Envelope protein is synthesized in the endoplasmic reticulum in the form of heterodimer with protein prM. They play a role in virion budding in the ER, and the newly formed immature particle is covered with 60 spikes composed of heterodimer between precursor prM and envelope protein E. The virion is transported to the Golgi apparatus where the low pH causes dissociation of PrM-E heterodimers and formation of E homodimers. prM-E cleavage is inefficient, and many virions are only partially matured. These uncleaved prM would play a role in immune evasion. In terms of biological role, involved in immune evasion, pathogenesis and viral replication. Once cleaved off the polyprotein, is targeted to three destinations: the viral replication cycle, the plasma membrane and the extracellular compartment. Essential for viral replication. Required for formation of the replication complex and recruitment of other non-structural proteins to the ER-derived membrane structures. Excreted as a hexameric lipoparticle that plays a role against host immune response. Antagonizing the complement function. Binds to the host macrophages and dendritic cells. Inhibits signal transduction originating from Toll-like receptor 3 (TLR3). Its function is as follows. Disrupts the host endothelial glycocalyx layer of host pulmonary microvascular endothelial cells, inducing degradation of sialic acid and shedding of heparan sulfate proteoglycans. NS1 induces expression of sialidases, heparanase, and activates cathepsin L, which activates heparanase via enzymatic cleavage. These effects are probably linked to the endothelial hyperpermeability observed in severe dengue disease. Functionally, component of the viral RNA replication complex that functions in virion assembly and antagonizes the host immune response. Required cofactor for the serine protease function of NS3. May have membrane-destabilizing activity and form viroporins. In terms of biological role, displays three enzymatic activities: serine protease, NTPase and RNA helicase. NS3 serine protease, in association with NS2B, performs its autocleavage and cleaves the polyprotein at dibasic sites in the cytoplasm: C-prM, NS2A-NS2B, NS2B-NS3, NS3-NS4A, NS4A-2K and NS4B-NS5. NS3 RNA helicase binds RNA and unwinds dsRNA in the 3' to 5' direction. Its function is as follows. Functions as a signal peptide for NS4B and is required for the interferon antagonism activity of the latter. Functionally, induces the formation of ER-derived membrane vesicles where the viral replication takes place. Inhibits interferon (IFN)-induced host STAT1 phosphorylation and nuclear translocation, thereby preventing the establishment of cellular antiviral state by blocking the IFN-alpha/beta pathway. Replicates the viral (+) and (-) RNA genome, and performs the capping of genomes in the cytoplasm. NS5 methylates viral RNA cap at guanine N-7 and ribose 2'-O positions. Besides its role in RNA genome replication, also prevents the establishment of cellular antiviral state by blocking the interferon-alpha/beta (IFN-alpha/beta) signaling pathway. Inhibits host TYK2 and STAT2 phosphorylation, thereby preventing activation of JAK-STAT signaling pathway. May reduce immune responses by preventing the recruitment of the host PAF1 complex to interferon-responsive genes. The sequence is that of Genome polyprotein from Dengue virus type 4 (strain Dominica/814669/1981) (DENV-4).